The primary structure comprises 50 residues: Large ribosomal subunit protein bL36B (50 aa).

This sequence belongs to the bacterial ribosomal protein bL36 family.

The chain is Large ribosomal subunit protein bL36B from Pseudomonas aeruginosa (strain UCBPP-PA14).